Here is a 242-residue protein sequence, read N- to C-terminus: N-glycosylase/DNA lyase (242 aa).

Glutamine 26, serine 53, and tryptophan 64 together coordinate 8-oxoguanine. Positions 120 to 184 are helix-hairpin-helix; sequence EGYYKNMKML…EDLRIKSVTS (65 aa). Lysine 144 acts as the Schiff-base intermediate with DNA in catalysis. 8-oxoguanine is bound by residues phenylalanine 148 and proline 174. Aspartate 176 is an active-site residue. 8-oxoguanine contacts are provided by aspartate 210 and tryptophan 214.

Belongs to the archaeal N-glycosylase/DNA lyase (AGOG) family.

It carries out the reaction 2'-deoxyribonucleotide-(2'-deoxyribose 5'-phosphate)-2'-deoxyribonucleotide-DNA = a 3'-end 2'-deoxyribonucleotide-(2,3-dehydro-2,3-deoxyribose 5'-phosphate)-DNA + a 5'-end 5'-phospho-2'-deoxyribonucleoside-DNA + H(+). In terms of biological role, DNA repair enzyme that is part of the base excision repair (BER) pathway; protects from oxidative damage by removing the major product of DNA oxidation, 8-oxoguanine (GO), from single- and double-stranded DNA substrates. The sequence is that of N-glycosylase/DNA lyase from Pyrococcus furiosus (strain ATCC 43587 / DSM 3638 / JCM 8422 / Vc1).